Reading from the N-terminus, the 335-residue chain is Corrinoid adenosyltransferase PduO (335 aa).

His-206 is a heme binding site.

The protein belongs to the Cob(I)alamin adenosyltransferase family. PduO subfamily. In terms of assembly, forms a complex with PduS. The cofactor is heme b. It depends on Mg(2+) as a cofactor.

The protein resides in the bacterial microcompartment. The enzyme catalyses cob(I)alamin-[corrinoid adenosyltransferase] + ATP = apo-[corrinoid adenosyltransferase] + adenosylcob(III)alamin + triphosphate. The protein operates within polyol metabolism; 1,2-propanediol degradation. It functions in the pathway cofactor biosynthesis; adenosylcobalamin biosynthesis. Functionally, converts cob(I)alamin to adenosylcobalamin (adenosylcob(III)alamin), the cofactor for propanediol dehydratase. Found in the bacterial microcompartment (BMC) dedicated to 1,2-propanediol (1,2-PD) degradation. PduS and PduO allow regeneration of the adenosylcobalamin cofactor within the BMC. Its function is as follows. Expression of a cosmid containing the full 21-gene pdu operon in E.coli allows E.coli to grow on 1,2-propanediol (1,2-PD) with the appearance of bacterial microcompartments (BMC) in its cytoplasm. The 1,2-PD-specific bacterial microcompartment (BMC) concentrates low levels of 1,2-PD catabolic enzymes, concentrates volatile reaction intermediates thus enhancing pathway flux and keeps the level of toxic, mutagenic propionaldehyde low. The sequence is that of Corrinoid adenosyltransferase PduO from Citrobacter freundii.